A 396-amino-acid chain; its full sequence is Phosphoglycerate kinase (396 aa).

Substrate contacts are provided by residues D21 to N23, R36, H59 to K62, R119, and R156. ATP is bound by residues K206, E325, and G352–S355.

The protein belongs to the phosphoglycerate kinase family. As to quaternary structure, monomer.

It localises to the cytoplasm. It catalyses the reaction (2R)-3-phosphoglycerate + ATP = (2R)-3-phospho-glyceroyl phosphate + ADP. The protein operates within carbohydrate degradation; glycolysis; pyruvate from D-glyceraldehyde 3-phosphate: step 2/5. This chain is Phosphoglycerate kinase, found in Staphylococcus haemolyticus (strain JCSC1435).